Reading from the N-terminus, the 282-residue chain is Acetyl-coenzyme A carboxylase carboxyl transferase subunit beta (282 aa).

The region spanning 29-282 (LMQRCPNCGL…LLKYGGMQDD (254 aa)) is the CoA carboxyltransferase N-terminal domain. The Zn(2+) site is built by Cys-33, Cys-36, Cys-51, and Cys-54. The C4-type zinc finger occupies 33 to 54 (CPNCGLEFFARRLDKYKTCPDC).

Belongs to the AccD/PCCB family. As to quaternary structure, acetyl-CoA carboxylase is a heterohexamer composed of biotin carboxyl carrier protein (AccB), biotin carboxylase (AccC) and two subunits each of ACCase subunit alpha (AccA) and ACCase subunit beta (AccD). It depends on Zn(2+) as a cofactor.

The protein resides in the cytoplasm. It carries out the reaction N(6)-carboxybiotinyl-L-lysyl-[protein] + acetyl-CoA = N(6)-biotinyl-L-lysyl-[protein] + malonyl-CoA. The protein operates within lipid metabolism; malonyl-CoA biosynthesis; malonyl-CoA from acetyl-CoA: step 1/1. In terms of biological role, component of the acetyl coenzyme A carboxylase (ACC) complex. Biotin carboxylase (BC) catalyzes the carboxylation of biotin on its carrier protein (BCCP) and then the CO(2) group is transferred by the transcarboxylase to acetyl-CoA to form malonyl-CoA. This is Acetyl-coenzyme A carboxylase carboxyl transferase subunit beta from Lactobacillus delbrueckii subsp. bulgaricus (strain ATCC BAA-365 / Lb-18).